The chain runs to 275 residues: Large ribosomal subunit protein uL2 (275 aa).

2 disordered regions span residues 28 to 54 and 223 to 275; these read APHAPLLEKKSKSGGRNNNGRITTRHI and VAMN…RNKK.

This sequence belongs to the universal ribosomal protein uL2 family. In terms of assembly, part of the 50S ribosomal subunit. Forms a bridge to the 30S subunit in the 70S ribosome.

Its function is as follows. One of the primary rRNA binding proteins. Required for association of the 30S and 50S subunits to form the 70S ribosome, for tRNA binding and peptide bond formation. It has been suggested to have peptidyltransferase activity; this is somewhat controversial. Makes several contacts with the 16S rRNA in the 70S ribosome. The sequence is that of Large ribosomal subunit protein uL2 from Saccharophagus degradans (strain 2-40 / ATCC 43961 / DSM 17024).